Consider the following 410-residue polypeptide: Serine/threonine transporter SstT (410 aa).

10 consecutive transmembrane segments (helical) span residues 15–35, 49–69, 82–102, 118–138, 142–162, 190–210, 217–237, 299–319, 331–351, and 358–378; these read GSLV…AWLS, FVNA…ISSI, PIVM…VVAS, IVPP…MVTN, AVMK…GFAF, FAPV…GFDA, LLGL…PLLV, MAGA…TLGI, LVAS…LLLI, and FGIP…IGVL.

This sequence belongs to the dicarboxylate/amino acid:cation symporter (DAACS) (TC 2.A.23) family.

The protein localises to the cell inner membrane. The catalysed reaction is L-serine(in) + Na(+)(in) = L-serine(out) + Na(+)(out). The enzyme catalyses L-threonine(in) + Na(+)(in) = L-threonine(out) + Na(+)(out). In terms of biological role, involved in the import of serine and threonine into the cell, with the concomitant import of sodium (symport system). This chain is Serine/threonine transporter SstT, found in Erwinia tasmaniensis (strain DSM 17950 / CFBP 7177 / CIP 109463 / NCPPB 4357 / Et1/99).